A 273-amino-acid chain; its full sequence is Phosphate import ATP-binding protein PstB (273 aa).

The ABC transporter domain maps to 26 to 268 (MRGEKVCVFY…PTEKRTQDYI (243 aa)). An ATP-binding site is contributed by 58–65 (GPSGCGKS).

It belongs to the ABC transporter superfamily. Phosphate importer (TC 3.A.1.7) family. As to quaternary structure, the complex is composed of two ATP-binding proteins (PstB), two transmembrane proteins (PstC and PstA) and a solute-binding protein (PstS).

The protein localises to the cell inner membrane. It carries out the reaction phosphate(out) + ATP + H2O = ADP + 2 phosphate(in) + H(+). Its function is as follows. Part of the ABC transporter complex PstSACB involved in phosphate import. Responsible for energy coupling to the transport system. The protein is Phosphate import ATP-binding protein PstB of Brucella abortus (strain 2308).